A 361-amino-acid polypeptide reads, in one-letter code: Phosphoserine aminotransferase (361 aa).

2 residues coordinate L-glutamate: Ser9 and Arg42. Pyridoxal 5'-phosphate is bound by residues 76-77 (AR), Trp102, Thr153, Asp173, and Gln196. An N6-(pyridoxal phosphate)lysine modification is found at Lys197. Residue 238–239 (NT) coordinates pyridoxal 5'-phosphate.

It belongs to the class-V pyridoxal-phosphate-dependent aminotransferase family. SerC subfamily. In terms of assembly, homodimer. Pyridoxal 5'-phosphate is required as a cofactor.

The protein resides in the cytoplasm. It carries out the reaction O-phospho-L-serine + 2-oxoglutarate = 3-phosphooxypyruvate + L-glutamate. It catalyses the reaction 4-(phosphooxy)-L-threonine + 2-oxoglutarate = (R)-3-hydroxy-2-oxo-4-phosphooxybutanoate + L-glutamate. It functions in the pathway amino-acid biosynthesis; L-serine biosynthesis; L-serine from 3-phospho-D-glycerate: step 2/3. The protein operates within cofactor biosynthesis; pyridoxine 5'-phosphate biosynthesis; pyridoxine 5'-phosphate from D-erythrose 4-phosphate: step 3/5. In terms of biological role, catalyzes the reversible conversion of 3-phosphohydroxypyruvate to phosphoserine and of 3-hydroxy-2-oxo-4-phosphonooxybutanoate to phosphohydroxythreonine. The sequence is that of Phosphoserine aminotransferase from Sodalis glossinidius (strain morsitans).